The following is a 188-amino-acid chain: Molybdopterin synthase catalytic subunit (188 aa).

Low complexity predominate over residues 1–14; the sequence is MTTQPPQDQTSTTP. The segment at 1–23 is disordered; the sequence is MTTQPPQDQTSTTPSLPPHLDPT. Substrate contacts are provided by residues 134-135, lysine 150, and 157-159; these read HR and KRE.

It belongs to the MoaE family. MOCS2B subfamily. In terms of assembly, heterotetramer; composed of 2 small (MOCS2A) and 2 large (MOCS2B) subunits.

It localises to the cytoplasm. The enzyme catalyses 2 [molybdopterin-synthase sulfur-carrier protein]-C-terminal-Gly-aminoethanethioate + cyclic pyranopterin phosphate + H2O = molybdopterin + 2 [molybdopterin-synthase sulfur-carrier protein]-C-terminal Gly-Gly + 2 H(+). Its pathway is cofactor biosynthesis; molybdopterin biosynthesis. Its function is as follows. Catalytic subunit of the molybdopterin synthase complex, a complex that catalyzes the conversion of precursor Z into molybdopterin. Acts by mediating the incorporation of 2 sulfur atoms from thiocarboxylated MOCS2A into precursor Z to generate a dithiolene group. This chain is Molybdopterin synthase catalytic subunit, found in Neosartorya fischeri (strain ATCC 1020 / DSM 3700 / CBS 544.65 / FGSC A1164 / JCM 1740 / NRRL 181 / WB 181) (Aspergillus fischerianus).